Here is a 249-residue protein sequence, read N- to C-terminus: 2,3-bisphosphoglycerate-dependent phosphoglycerate mutase (249 aa).

Substrate is bound by residues 8–15, 21–22, Arg60, 87–90, Lys98, 114–115, and 183–184; these read RHGESIWN, TG, ERHY, RR, and GN. His9 acts as the Tele-phosphohistidine intermediate in catalysis. The active-site Proton donor/acceptor is Glu87.

Belongs to the phosphoglycerate mutase family. BPG-dependent PGAM subfamily.

The enzyme catalyses (2R)-2-phosphoglycerate = (2R)-3-phosphoglycerate. It participates in carbohydrate degradation; glycolysis; pyruvate from D-glyceraldehyde 3-phosphate: step 3/5. Functionally, catalyzes the interconversion of 2-phosphoglycerate and 3-phosphoglycerate. This chain is 2,3-bisphosphoglycerate-dependent phosphoglycerate mutase, found in Caldanaerobacter subterraneus subsp. tengcongensis (strain DSM 15242 / JCM 11007 / NBRC 100824 / MB4) (Thermoanaerobacter tengcongensis).